Reading from the N-terminus, the 214-residue chain is Proteasome subunit beta (214 aa).

The propeptide at 1–11 is removed in mature form; by autocatalysis; it reads MLDTSQEIMKG. Residue Thr12 is the Nucleophile of the active site.

The protein belongs to the peptidase T1B family. The 20S proteasome core is composed of 14 alpha and 14 beta subunits that assemble into four stacked heptameric rings, resulting in a barrel-shaped structure. The two inner rings, each composed of seven catalytic beta subunits, are sandwiched by two outer rings, each composed of seven alpha subunits. The catalytic chamber with the active sites is on the inside of the barrel. Has a gated structure, the ends of the cylinder being occluded by the N-termini of the alpha-subunits. Is capped at one or both ends by the proteasome regulatory ATPase, PAN.

It is found in the cytoplasm. It catalyses the reaction Cleavage of peptide bonds with very broad specificity.. The formation of the proteasomal ATPase PAN-20S proteasome complex, via the docking of the C-termini of PAN into the intersubunit pockets in the alpha-rings, triggers opening of the gate for substrate entry. Interconversion between the open-gate and close-gate conformations leads to a dynamic regulation of the 20S proteasome proteolysis activity. Functionally, component of the proteasome core, a large protease complex with broad specificity involved in protein degradation. The polypeptide is Proteasome subunit beta (Methanoculleus marisnigri (strain ATCC 35101 / DSM 1498 / JR1)).